Consider the following 268-residue polypeptide: Dioscorin DB3S (268 aa).

The region spanning 25–259 is the Alpha-carbonic anhydrase domain; that stretch reads DEFSYIEGNP…TNFRSVFYFE (235 aa). An intrachain disulfide couples Cys50 to Cys209. The active-site Proton acceptor is His91. Residues Asp92, 117–119, Gln136, and 205–206 each bind L-ascorbate; these read HFH and TA.

It belongs to the alpha-class carbonic anhydrase family. As to quaternary structure, monomer. Homodimer. In terms of processing, not glycosylated. In terms of tissue distribution, expressed in tuber (at protein level).

The catalysed reaction is hydrogencarbonate + H(+) = CO2 + H2O. The enzyme catalyses 2 monodehydro-L-ascorbate radical + NADH + H(+) = 2 L-ascorbate + NAD(+). Storage protein of tuber. Involved in protection against oxidative stress. Has carbonate dehydratase and weak trypsin inhibitor activity detected by measuring the dehydration of sodium bicarbonate and the inhibition of trypsin-catalyzed hydrolysis of N-benzoyl-L-arginine-4-nitro anilide, respectively. Contrarily, no carbonate dehydratase or trypsin inhibitor activity detected by measuring the hydrolysis of 4-nitrophenyl acetate or the inhibition of bovine trypsin-catalyzed hydrolysis of N-benzoyl-L-arginine ethyl ester, respectively. Has dehydroascorbate (DHA) reductase and monodehydroascorbate (MDA) reductase activities. Catalyzes the reactions of carbonate dehydratase and DHA reductase independently of zinc and glutathione (GSH). The coupled reaction is capable of recycling a plant antioxidant ascorbate using ubiquitous compounds H(2)O and CO(2). Exhibits antioxidant activity. Able to scavenge 1,1-diphenyl-2-picrylhydrazyl (DPPH) radical and hydroxyl radicals. Exhibits immunomodulatory activity. Activates Toll-like receptor 4 signaling pathways by up-regulating the gene expression of pro-inflammatory cytokines, such as tumor necrosis factor alpha, interleukin-1 beta and interleukin-6, and chemokines RANTES and MCP-1, in mouse RAW 264.7 macrophages. Stimulates the phagocytosis of E.coli by the LPS-treated mouse macrophages. This Dioscorea polystachya (Chinese yam) protein is Dioscorin DB3S.